The chain runs to 193 residues: Imidazoleglycerol-phosphate dehydratase (193 aa).

It belongs to the imidazoleglycerol-phosphate dehydratase family.

The protein resides in the cytoplasm. It catalyses the reaction D-erythro-1-(imidazol-4-yl)glycerol 3-phosphate = 3-(imidazol-4-yl)-2-oxopropyl phosphate + H2O. It functions in the pathway amino-acid biosynthesis; L-histidine biosynthesis; L-histidine from 5-phospho-alpha-D-ribose 1-diphosphate: step 6/9. This is Imidazoleglycerol-phosphate dehydratase from Methanospirillum hungatei JF-1 (strain ATCC 27890 / DSM 864 / NBRC 100397 / JF-1).